The sequence spans 285 residues: HTH-type transcriptional regulator MurR (285 aa).

The HTH rpiR-type domain maps to 1–77 (MLYLTKIRNA…MALIGEYSAS (77 aa)). Residues 37 to 56 (SRKMAKQLGISQSSIVKFAQ) constitute a DNA-binding region (H-T-H motif). Residues 128 to 268 (IIEVISKAPF…FVGLVQLNDV (141 aa)) form the SIS domain.

Homotetramer.

It functions in the pathway amino-sugar metabolism; N-acetylmuramate degradation [regulation]. Its function is as follows. Represses the expression of the murPQ operon involved in the uptake and degradation of N-acetylmuramic acid (MurNAc). Binds to two adjacent inverted repeats within the operator region. MurNAc 6-phosphate, the substrate of MurQ, is the specific inducer that weakens binding of MurR to the operator. The protein is HTH-type transcriptional regulator MurR of Escherichia coli O9:H4 (strain HS).